The chain runs to 559 residues: Potassium-transporting ATPase potassium-binding subunit (559 aa).

Helical transmembrane passes span 5–25, 63–83, 131–151, 173–193, 254–274, 282–302, 327–347, 356–376, 379–399, 416–436, 483–503, and 525–545; these read GFLL…PLGT, LLAI…LLML, VGLT…VFAL, ITLW…IQQG, VQML…GEVV, AILW…MWAE, FGIL…CGAV, ALGG…FGGV, GLYG…LMVG, MIAL…ALAM, LLLA…VMAI, and ALFI…TFIP.

Belongs to the KdpA family. In terms of assembly, the system is composed of three essential subunits: KdpA, KdpB and KdpC.

The protein localises to the cell inner membrane. Part of the high-affinity ATP-driven potassium transport (or Kdp) system, which catalyzes the hydrolysis of ATP coupled with the electrogenic transport of potassium into the cytoplasm. This subunit binds the periplasmic potassium ions and delivers the ions to the membrane domain of KdpB through an intramembrane tunnel. The polypeptide is Potassium-transporting ATPase potassium-binding subunit (Klebsiella pneumoniae (strain 342)).